Here is a 199-residue protein sequence, read N- to C-terminus: Probable DNA-directed RNA polymerase subunit delta (199 aa).

An HTH HARE-type domain is found at leucine 14 to tryptophan 81. Acidic residues-rich tracts occupy residues glycine 116–aspartate 147, alanine 157–leucine 171, and leucine 182–lysine 199. The interval glycine 116 to lysine 199 is disordered.

The protein belongs to the RpoE family. As to quaternary structure, RNAP is composed of a core of 2 alpha, a beta and a beta' subunits. The core is associated with a delta subunit and one of several sigma factors.

Its function is as follows. Participates in both the initiation and recycling phases of transcription. In the presence of the delta subunit, RNAP displays an increased specificity of transcription, a decreased affinity for nucleic acids, and an increased efficiency of RNA synthesis because of enhanced recycling. The sequence is that of Probable DNA-directed RNA polymerase subunit delta from Lactiplantibacillus plantarum (strain ATCC BAA-793 / NCIMB 8826 / WCFS1) (Lactobacillus plantarum).